The sequence spans 398 residues: Acetate kinase (398 aa).

Asn-10 provides a ligand contact to Mg(2+). Lys-17 contacts ATP. Arg-91 contributes to the substrate binding site. The active-site Proton donor/acceptor is the Asp-148. Residues 208–212 (HLGNG), 283–285 (DCR), and 331–335 (GIGEN) each bind ATP. Residue Glu-385 coordinates Mg(2+).

It belongs to the acetokinase family. In terms of assembly, homodimer. Mg(2+) serves as cofactor. Mn(2+) is required as a cofactor.

It is found in the cytoplasm. It carries out the reaction acetate + ATP = acetyl phosphate + ADP. The protein operates within metabolic intermediate biosynthesis; acetyl-CoA biosynthesis; acetyl-CoA from acetate: step 1/2. Functionally, catalyzes the formation of acetyl phosphate from acetate and ATP. Can also catalyze the reverse reaction. The polypeptide is Acetate kinase (Shewanella pealeana (strain ATCC 700345 / ANG-SQ1)).